A 393-amino-acid chain; its full sequence is Argininosuccinate synthase (393 aa).

Residues 7-15 (AYSGGLDTS) and Ala34 contribute to the ATP site. L-citrulline is bound by residues Tyr85 and Ser90. Gly115 serves as a coordination point for ATP. L-aspartate is bound by residues Thr117, Asn121, and Asp122. Residue Asn121 participates in L-citrulline binding. L-citrulline is bound by residues Arg125, Ser176, Ser185, Glu261, and Tyr273.

It belongs to the argininosuccinate synthase family. Type 1 subfamily. Homotetramer.

It localises to the cytoplasm. The catalysed reaction is L-citrulline + L-aspartate + ATP = 2-(N(omega)-L-arginino)succinate + AMP + diphosphate + H(+). It participates in amino-acid biosynthesis; L-arginine biosynthesis; L-arginine from L-ornithine and carbamoyl phosphate: step 2/3. In Ehrlichia canis (strain Jake), this protein is Argininosuccinate synthase.